A 4516-amino-acid chain; its full sequence is MVTLSISDTLHTPAFVENRHLAITGMPTRKANNGFPSPDDNNVWGQFWKDLQTPLLVVVYVHGAQCQLLLPIENRRVSSGSDKSLKNGMEECDKEEASTSSQGPGYCPANVPENHDLEKMLKESSRNPEKTSPNPELKTPPLPLSDLGQPRKSPLAGTDKKYPIMKQRGFYSDILSPGTLDQLGDVCCGPYLSQNLIRQADLDKFTPKGQCHEHWAAESFVIPEDFQERVEQQSIGTTTRLLTQTDFPLQSYEPKVQVPFQVLPGRCPRKIEIERRKQQYLRLDIEQLLANEGIDSNKLMPRHPDLQQPQTIEQGRDPLFPIYLPLKVFDNEEFDCRTPTEWLNMGLEPDAQYRKPVPGKALLPTDDALGHVHRAGCKQVSFSKCINTGISLPEAGKKQSVSFTLDSNDRNNLTKLSPVLQCLAIKPWEQGHVKCTEFQLPRFTGALALSRNTRAKRGSQEASTRDHLDFEDPKSQELDYRWCEVGVLDYDEEKKLYLVQKTDKRGLVRDEMGMPIVNGGVTPEGRPPLLDTQYWVPRIQLLFCAEDPRVFTQRVVQANALRKNTEALLLYNLYVDCMPTEGQRVINEQSLSKIKQWALSTPRMRKGPSVLEHLSSLAREVNLDYERSMNKINFDQIVSSKPETFSFVTLPEKEEEKVPNQGLVSVPEYPFREQKEDFTFVSLLTRSEVITALSKVRAECNKVTSMSLFHSNLSKYSRLEEFEQIQSQTFSQVQMFLKDSWISTLKVAMRSSLRDMSKGWYNLYETNWEVYLMSKLRKLMELIKYMLQDTLRFLVQDSLGSFAQFIGDACCSVLECIDDMDWGEDLINSPYKPRKNPLFIVDLVLDNTGVHYSTPLEQFEVILLNLFDKGILATHAVPQLEKLVMEDIFISGDPLLESVGLHEPLVEELRANITNAMHKAMIPLQAYAKEYRKTYQTQCPSAEEVREVVITHLKEKEILDNSLPSSIIIGPFYINVDNVKQSLSKKRKALATSMLDILAKNLHNEVDSICEEFRSISRKIYEKPNSIEELAELRDWMKGIPEKLVILEVRQALALAARSLVEPEVGPALEIPFNNPLPSMTRHFLLMQERIVKVMSDYEVMDEFFYNLTTDDFNDKWAANNWPTKILGQIDMVRQQHVEDEEKFRKIQLMDQNNFQEKLEGLQLVVAGFSTHVEIARAHEIANEVRRVKKQLKDCQQLAMLYNNRERIFGLPITNYDKLSRMVKEFQPYLDLWTTASDWLRWSESWMNDPLSAIDAEQLEKNVIESFKTMHKCVKQFKDIPACQDVALDIRARIDEFKPYIPLIQGLRNPGMRNRHWEVLSNEININVRPKANLTFARCLEMNLQDYIESISKVAEVAGKEYAIEQALDKMEKEWASILFNVLPYKETDTYILKSPDEASQLLDDHIVMTQSMSFSPYKKPFEQRINSWETKLKLTQEVLEEWLNCQRSWLYLEPIFSSEDITRQLPVESKRYQTMERIWRKIMKNAYENREVINVCSDQRLLDSLRDCNKLLDLVQKGLSEYLETKRTAFPRFYFLSDDELLEILSQTKDPTAVQPHLRKCFENIARLLFQEDLEITHMYSAEGEEVKLSFSIYPSSNVEDWLLEVERSMKASVHDIIEMAIKAYPTMLRTEWVLSWPGQVTIAGCQTYWTLEVAQALEASSISSSLFPQLSKQLSDLVALVRGKLSRMQRMVLSALIVIEVHAKDVVSKLIDENVVSVHDFEWISQLRYYWTNNDLYIRAVNAEFIYGYEYLGNSGRLVITPLTDRCYLTLTGALHLKFGGAPAGPAGTGKTETTKDLGKALAIQTVVFNCSDQLDFMAMGKFFKGLASAGAWACFDEFNRIDIEVLSVVAQQITTIQKAQQQRSREYIKSLGGAVMCLPFLCVLYVQALFRPVAMMVPDYAMIAEISLYSFGFNEANVLAKKITTTFKLSSEQLSSQDHYDFGMRAVKTVISAAGNLKRENPTMNEELICLRAIRDVNVPKFLQEDLKLFSGIVSDLFPTTKEEETDYGILDQAIRKACEKNNLKDVEGFLIKCIQLYETTVVRHGLMLVGPTGSGKSNCYRILAAAMTSLKGKPSISGGVYEAVNYYVLNPKSITMGQLYGEFDLLTHEWTDGIFPSLIRAGAIASDTNKKWYMFDGPVDAVWIENMNTVLDDNKKLCLSSGEIIKLTEAMTMMFEVQDLAVASPATVSRCGMVYLEPSILGLMPFVECWLKHLPSIIKPYEEQFKTLFVKFLESSIAFVRTTVKEVVASTNSNLTMSLLKLLDCFFKPFLPREGLKKIPSEKLSHIPELIEPWFIFSLVWSVGATGDHSSRLNFSQWLKIKMVFEQIKLAFPEEGLVYDYRLDDAGISSTEDDDEDDEESKQVATALPAQEGGMVKPPGLWDLPPRDSGHLEKATLTASRSEAVAWVKWMDYSVPFTMMPDTNYCNIIVPTMDTMQMSYLLGMLITNHKPVLCIGPTGTGKTLTVSNKLLKNLPLEYISHFLTFSARTSANQTQDLIDSKLDKRRKGVFGPPLGRNFIFFIDDLNMPALETYGAQPPIELLRQWMDHGGWYDRKIIGAFKNLVDINFVCAMGPPGGGRNAITPRLTRHFNYLSFIEMDEVSKKRIFSIILGCWMDGLLGEKSYREPVPGAPNIVHMTEPLVNATISIYAIITSQLLPTPAKSHYTFNLRDLSKVFQGILMAEPAKVEDKVQLLRLWYHENCRVFRDRLVNEEDRGWFDGLLEMKMEDLGVAFNKVCPFQPILYGDFMSPGSDVKSYELITSENKMMQVIEEYMEDYNQINTAKLKLVLFVDAMSHICRISRTLRQALGNALLLGVGGSGRSSLTRLASHMAEYECFQVELSKNYGMSEWREDVKKILLKAGMQNLPITFLFSDTQIKNESFLEDINNILNSGDIPNLYSADEQDQIVNTMRPYIQEQGLQPTKANLMAAYTGRVRNNIHMVLCMSPIGEVFRARLRQFPSLVNCCTIDWFNEWPAEALQSVATRFLHEIPELECSSEVIEGLIHVCVYIHQSVAKKCVEYLAELARHNYVTPKSYLELLNIFSILIGQKKMELKTAKHRMKSGLDKLLRTSEDVAKMQEELEIMRPLLEEAAKDTLLTMDQIKVDTAIAEETRKSVQAEEIKANEKASKAQAIADDAQKDLDEALPALDAALASLRNLNKNDVTEVRAMQRPPPGVKLVIEAVCIMKGIKPKKVPGEKPGSKVDDYWEPGKGLLQDPGRFLESLFKFDKDNIGEAVIKAIQPYIDNEEFQPAAIAKVSKACTSICQWVRAMHKYHFVAKAVEPKRQALREAQDDLEVTQRILEEAKHHLREVEDGISTLQAKYRECVTKKEELEMKCEQCEQRLGRADKSQSPGQPPGAHPTRLLLQLINGLADEKVRWQDTVENLENMLDNIFGDVLVAAGFVAYLGPFTGQYRAALYEYWVNQLTVYGVPHTSKPTLISTLGNPVKIRSWQIAGLPNDTLSVENGVINQFSQRWTHFIDPQGQANKWIKNMEKESGLDVFKLSDRDFLRSMENAIRFGKPCLLENVGEELDPALEPVLLKQTYKQQGNTVLKLGDTVIPYHEDFRMYITTKLPNPHYSPEVSTKLTLINFTLSPSGLEDQLLGQVVAEERPDLEEAKNQLIISNAKMRQELKDIEDQILYRLSSSEGNPVDDVELIKVLEASKMKAAEIQAKVRIAEQTEKDIDLTRMEYIPVAVRTQILFFCVSDLANVDPMYQYSLEWFLNIFLSGIANSERADNLKKRIVNINRYLTFSLYSNVCRSLFEKHKLMFAFLLCVRIMMNEGKINQGEWRYLLSGGSIQTMSENPAPHWLSDRAWRDILALSNLPAFSTFSTDFVQHLPKFQAIFDSAEPHREPLPGIWNTYLDEFQKLLILRCLRGDKVTNAMQDFVANHLEPRFIEPQTANLSAVFKESNSTTPLIFVLSPGTDPAADLYKFAEEMKFSKKLSAISLGQGQGPRAEAMMRNSIERGKWVFFQNCHLAPSWMPALERLIEHINPDKVHRDFRLWLTSLPSNKFPVSILQNGSKMTIEPPRGVKANLLKSYNSLSDDFLHSCQKVVEFKSLLLSLCLFHGNALERRKFGPLGFNIPYEFTDGDLRICISQLKMFLDEYEDIPYKVLKYTAGEINYGGRVTDDWDRRCVMNILEDFYNPAVLSPEHRYSKSGIYHQIPPTYDLNGYLSYIKSLPLNDMPEIFGLHDNANITFAQNETFALFGAILQLQPKSSSMGGQSREELVEDVAEDILVQVPKPVDLEEVVNKYPVLYEESMNTVLVQEVIRYNKLLMVITQTLSDMLKAIKGLVVMSLELELMSTSLYNNAVPELWKSKAYPSLKPLASWIMDLLQRLNFLHSWIKNGIPSVFWISGFFFPQAFLTGTLQNFARKFVISIDTITFDFKVLSYASSEIAERPSTGCYIYGLFLEGARWDPFDFQLAESRPKELYTEMAVIWLLPVANRKVQNQDFYLCPIYKTLTRAGTLSTTGHSTNYVIAVEIPSNQPQRHWIKRGVALICALDY.

Positions 1–1748 are stem; it reads MVTLSISDTL…YIRAVNAEFI (1748 aa). Residues 78 to 160 are disordered; the sequence is SSGSDKSLKN…RKSPLAGTDK (83 aa). Basic and acidic residues-rich tracts occupy residues 83–97 and 113–129; these read KSLK…KEEA and ENHD…RNPE. AAA regions lie at residues 1749 to 1956, 2016 to 2249, 2422 to 2682, and 2780 to 2972; these read YGYE…VISA, QAIR…TTVK, TMMP…VFQG, and DYNQ…CCTI. The short motif at 1787–1794 is the GPAGTGKT motif element; that stretch reads GPAGTGKT. 1787–1794 lines the ATP pocket; it reads GPAGTGKT. Residues 1837–1843 carry the CFDEFNR motif motif; sequence CFDEFNR. ATP is bound by residues 2054–2061, 2460–2467, and 2819–2826; these read GPTGSGKS, GPTGTGKT, and GVGGSGRS. The stalk stretch occupies residues 2987-3285; that stretch reads ATRFLHEIPE…MHKYHFVAKA (299 aa). The stretch at 3293-3394 forms a coiled coil; the sequence is LREAQDDLEV…QDTVENLENM (102 aa). AAA regions lie at residues 3388–3618 and 3831–4050; these read VENL…EERP and LPAF…SYNS.

It belongs to the dynein heavy chain family. As to quaternary structure, consists of at least two heavy chains and a number of intermediate and light chains. As to expression, expressed in brain.

The protein localises to the cytoplasm. It is found in the cytoskeleton. It localises to the cilium axoneme. Its subcellular location is the cell projection. The protein resides in the cilium. The protein localises to the flagellum. Force generating protein of cilia required for sperm flagellum motility. Produces force towards the minus ends of microtubules. Dynein has ATPase activity; the force-producing power stroke is thought to occur on release of ADP. Required in spermatozoa for the formation of the inner dynein arms and biogenesis of the axoneme. The chain is Dynein axonemal heavy chain 1 from Rattus norvegicus (Rat).